The primary structure comprises 402 residues: Bone morphogenetic protein 8A (402 aa).

A signal peptide spans 1 to 19 (MAARPGPLWLLGLTLCALG). Positions 20–263 (GGGPGLRPPP…ASPSPIRTPR (244 aa)) are excised as a propeptide. 2 N-linked (GlcNAc...) asparagine glycosylation sites follow: asparagine 158 and asparagine 343. 3 disulfides stabilise this stretch: cysteine 301-cysteine 367, cysteine 330-cysteine 399, and cysteine 334-cysteine 401.

It belongs to the TGF-beta family. As to quaternary structure, homodimer; disulfide-linked.

The protein localises to the secreted. Functionally, induces cartilage and bone formation. May be the osteoinductive factor responsible for the phenomenon of epithelial osteogenesis. Plays a role in calcium regulation and bone homeostasis. Signaling protein involved in regulation of thermogenesis and energy balance. Proposed to increase the peripheral response of brown adipose tissue (BAT) to adrenergic stimulation while acting centrally in the hypothalamus to increase sympathetic output to BAT. Its function is as follows. Growth factor of the TGF-beta superfamily that plays important role in various biological processes, including spermatogenesis, osteogenesis, steroidogenesis as well as regulation of energy balance. Initiates the canonical BMP signaling cascade by associating with type I receptor BMPR1A and type II receptor BMPR2. Once all three components are bound together in a complex at the cell surface, BMPR2 phosphorylates and activates BMPR1A. In turn, BMPR1A propagates signal by phosphorylating SMAD1/5/8 that travel to the nucleus and act as activators and repressors of transcription of target genes. In addition, activates the SMAD2/3 pathway. In Homo sapiens (Human), this protein is Bone morphogenetic protein 8A (BMP8A).